The following is a 289-amino-acid chain: ATP synthase subunit gamma, mitochondrial (289 aa).

The protein belongs to the ATPase gamma chain family. In terms of assembly, F-type ATPases have 2 components, CF(1) - the catalytic core - and CF(0) - the membrane proton channel. CF(1) has five subunits: alpha(3), beta(3), gamma(1), delta(1), epsilon(1). CF(0) has three main subunits: a, b and c.

It localises to the mitochondrion. It is found in the mitochondrion inner membrane. Mitochondrial membrane ATP synthase (F(1)F(0) ATP synthase or Complex V) produces ATP from ADP in the presence of a proton gradient across the membrane which is generated by electron transport complexes of the respiratory chain. F-type ATPases consist of two structural domains, F(1) - containing the extramembraneous catalytic core, and F(0) - containing the membrane proton channel, linked together by a central stalk and a peripheral stalk. During catalysis, ATP synthesis in the catalytic domain of F(1) is coupled via a rotary mechanism of the central stalk subunits to proton translocation. Part of the complex F(1) domain and the central stalk which is part of the complex rotary element. The gamma subunit protrudes into the catalytic domain formed of alpha(3)beta(3). Rotation of the central stalk against the surrounding alpha(3)beta(3) subunits leads to hydrolysis of ATP in three separate catalytic sites on the beta subunits. The sequence is that of ATP synthase subunit gamma, mitochondrial (ATP3) from Kluyveromyces lactis (strain ATCC 8585 / CBS 2359 / DSM 70799 / NBRC 1267 / NRRL Y-1140 / WM37) (Yeast).